A 231-amino-acid polypeptide reads, in one-letter code: Aquaporin Z (231 aa).

Transmembrane regions (helical) follow at residues F11–F31 and I36–I56. The short motif at N65–A67 is the NPA 1 element. 3 helical membrane-spanning segments follow: residues L84–I104, M132–G152, and G161–I181. An NPA 2 motif is present at residues N187 to A189. Residues V203–I223 form a helical membrane-spanning segment.

This sequence belongs to the MIP/aquaporin (TC 1.A.8) family. In terms of assembly, homotetramer.

The protein resides in the cell inner membrane. The catalysed reaction is H2O(in) = H2O(out). In terms of biological role, channel that permits osmotically driven movement of water in both directions. It is involved in the osmoregulation and in the maintenance of cell turgor during volume expansion in rapidly growing cells. It mediates rapid entry or exit of water in response to abrupt changes in osmolarity. This chain is Aquaporin Z, found in Shewanella oneidensis (strain ATCC 700550 / JCM 31522 / CIP 106686 / LMG 19005 / NCIMB 14063 / MR-1).